Here is a 552-residue protein sequence, read N- to C-terminus: MADGVDHIDIYADVGEEFNQEAEYGGHDQIDLYDDVISPSANNGDAPEDRDYMDTLPPTVGDDVGKGAAPNVVYTYTGKRIALYIGNLTRWTTDEDLTEAVHSLGVNDILEIKFFENRANGQSKGFALVGVGSEASSKKLMDLLPKRELHGQNPVVTPCNKQFLSQFEMQSRKTTQSGQMSGEGKAGPPGGSSRAAFPQGGRGRGRFPGAVPGGDRFPGPTGPGGPPPPFPAGQTPPRPPLGPPGPPGPPGPPPPGQVLPPPLAGPPNRGDRPPPPVLFPGQPFGQPPLGPLPPGPPPPVPGYGPPPGPPPPQQGPPPPPGPFPPRPPGPLGPPLTLAPPPHLPGPPPGAPPPAPHVNPAFFPPPTNSGMPTSDSRGPPPTDPYGRPPPYDRGDYGPPGREMDTARTPLSEAEFEEIMNRNRAISSSAISRAVSDASVGDYGSAIETLVTAISLIKQSKVSADDRCKVLISSLQDCLHGIESKSYGSGSRRRERSRERDHSRSREKSRRHKSRSRDRHDDYYRERSRERERHRDRDRDRDRERDREREYRHR.

Positions 1-213 (MADGVDHIDI…RGRFPGAVPG (213 aa)) are necessary for interaction with NXF1. One can recognise an RRM domain in the interval 81-161 (IALYIGNLTR…QNPVVTPCNK (81 aa)). The tract at residues 81 to 161 (IALYIGNLTR…QNPVVTPCNK (81 aa)) is necessary for interaction with NUDT21/CPSF5. Positions 81–161 (IALYIGNLTR…QNPVVTPCNK (81 aa)) are necessary for nuclear paraspeckles localization. A Phosphothreonine modification is found at T157. The segment covering 169–180 (MQSRKTTQSGQM) has biased composition (polar residues). 2 disordered regions span residues 169-411 (MQSR…PLSE) and 479-552 (GIES…YRHR). The short motif at 202-206 (RGRGR) is the GAR element. The span at 207–219 (FPGAVPGGDRFPG) shows a compositional bias: low complexity. 3 stretches are compositionally biased toward pro residues: residues 220–265 (PTGP…PLAG), 285–366 (GQPP…PPPT), and 377–388 (GPPPTDPYGRPP). The span at 389 to 404 (PYDRGDYGPPGREMDT) shows a compositional bias: basic and acidic residues. T404 and T407 each carry phosphothreonine. Residues 404–552 (TARTPLSEAE…RDREREYRHR (149 aa)) form a sufficient for nuclear speckle localization region. Residues 405 to 552 (ARTPLSEAEF…RDREREYRHR (148 aa)) are necessary for RNA-binding. Residues 481 to 552 (ESKSYGSGSR…RDREREYRHR (72 aa)) are necessary for interaction with SRSF3, SRSF7 and TRA2B/SFRS10. The segment at 491–552 (RRERSRERDH…RDREREYRHR (62 aa)) is arg/Ser-rich domain. A compositionally biased stretch (basic and acidic residues) spans 494-504 (RSRERDHSRSR). Phosphoserine is present on residues S495, S501, S512, S514, and S526. Positions 505-515 (EKSRRHKSRSR) are enriched in basic residues. The sufficient for nuclear targeting stretch occupies residues 511 to 552 (KSRSRDRHDDYYRERSRERERHRDRDRDRDRERDREREYRHR). Over residues 516–552 (DRHDDYYRERSRERERHRDRDRDRDRERDREREYRHR) the composition is skewed to basic and acidic residues.

It belongs to the RRM CPSF6/7 family. Component of the cleavage factor Im (CFIm) complex which is a heterotetramer composed of two subunits of NUDT21/CPSF5 and two subunits of CPSF6 or CPSF7 or a heterodimer of CPSF6 and CPSF7. The cleavage factor Im (CFIm) complex associates with the CPSF and CSTF complexes to promote the assembly of the core mRNA 3'-processing machinery. Associates with the exon junction complex (EJC). Associates with the 80S ribosome particle. Interacts (via the RRM domain) with NUDT21/CPSF5; this interaction is direct and enhances binding to RNA. Interacts (via Arg/Ser-rich domain) with FIP1L1 (preferentially via unphosphorylated form and Arg/Glu/Asp-rich domain); this interaction mediates, at least in part, the interaction between the CFIm and CPSF complexes and may be inhibited by CPSF6 hyper-phosphorylation. Interacts (via N-terminus) with NXF1; this interaction is direct. Interacts with SRSF3. Interacts with SRSF7. Interacts with SNRNP70. Interacts with TRA2B/SFRS10. Interacts with UPF1. Interacts with UPF3B. Interacts with VIRMA. Interacts (via Arg/Ser-rich domain) with TNPO3; promoting nuclear import of CPSF6 independently of its phosphorylation status. Interacts with YTHDC1. In terms of processing, phosphorylated. Phosphorylated in the Arg/Ser-rich domain by SRPK1, in vitro. Symmetrically dimethylated on arginine residues in the GAR motif by PRMT5 in a WDR77- and CLNS1A-dependent manner. Asymmetrically dimethylated on arginine residues in the GAR motif by PRMT1.

The protein localises to the nucleus. It is found in the nucleoplasm. Its subcellular location is the nucleus speckle. The protein resides in the cytoplasm. Component of the cleavage factor Im (CFIm) complex that functions as an activator of the pre-mRNA 3'-end cleavage and polyadenylation processing required for the maturation of pre-mRNA into functional mRNAs. CFIm contributes to the recruitment of multiprotein complexes on specific sequences on the pre-mRNA 3'-end, so called cleavage and polyadenylation signals (pA signals). Most pre-mRNAs contain multiple pA signals, resulting in alternative cleavage and polyadenylation (APA) producing mRNAs with variable 3'-end formation. The CFIm complex acts as a key regulator of cleavage and polyadenylation site choice during APA through its binding to 5'-UGUA-3' elements localized in the 3'-untranslated region (UTR) for a huge number of pre-mRNAs. CPSF6 enhances NUDT21/CPSF5 binding to 5'-UGUA-3' elements localized upstream of pA signals and promotes RNA looping, and hence activates directly the mRNA 3'-processing machinery. Plays a role in mRNA export. This is Cleavage and polyadenylation specificity factor subunit 6 from Pongo abelii (Sumatran orangutan).